A 332-amino-acid chain; its full sequence is METGHPPSLQELCVVVLMRHHAQLEDIGHMPYALVRRVLLKMSAEQLLRLERASPALLLEDEEAWQQLLKKDFPTNVHEVWVARKKDVYEYYLESVRELGPQVLEDRALVRSLLRAAVCKDPVLFKYRVPSRQLYQRYVHEDARRQELSAARLRQSTLQLQQEKQKTRITQLEDPLYLERELNAGRQRAAPQRSSIYLKSFKELRQRQAHFRSGGYDPTQRRIVRVQTPSAQPAASLHPPPQSAPMAGSPQKPAPPEQPLAASPTPEAPGPLAQRRRPSARRQPPPASPAKRRSALFSSPALSTLLPQQDDTDSDTGGRPPKKPRVYIHTPR.

Residues 24–68 form the F-box domain; it reads LEDIGHMPYALVRRVLLKMSAEQLLRLERASPALLLEDEEAWQQL. The disordered stretch occupies residues 228–332; that stretch reads TPSAQPAASL…KPRVYIHTPR (105 aa). The segment covering 296–309 has biased composition (polar residues); it reads LFSSPALSTLLPQQ. Positions 320 to 332 are enriched in basic residues; sequence PPKKPRVYIHTPR.

Belongs to the ELA1 family. Heterodimer with ELC1. Component of a CRL3 E3 ubiquitin ligase complex consisting of a cullin, the linker protein ELC1, the substrate receptor ELA1, and a RING protein. Interacts with the large RNA polymerase II subunit RPO21 in a manner dependent on DEF1.

In terms of biological role, as part of the CRL3 E3 ubiquitin ligase complex; polyubiquitylates monoubiquitylated RNA polymerase II subunit RPO21 to trigger its proteolysis; plays a role in global genomic repair. The chain is Elongin-A (ELA1) from Eremothecium gossypii (strain ATCC 10895 / CBS 109.51 / FGSC 9923 / NRRL Y-1056) (Yeast).